The primary structure comprises 283 residues: Pantothenate synthetase (283 aa).

Residue 30–37 coordinates ATP; that stretch reads MGNLHDGH. His-37 (proton donor) is an active-site residue. Gln-61 is a (R)-pantoate binding site. Gln-61 serves as a coordination point for beta-alanine. 149-152 contacts ATP; sequence GEKD. Gln-155 contacts (R)-pantoate. Position 186–189 (186–189) interacts with ATP; the sequence is LSSR.

It belongs to the pantothenate synthetase family. In terms of assembly, homodimer.

It localises to the cytoplasm. The catalysed reaction is (R)-pantoate + beta-alanine + ATP = (R)-pantothenate + AMP + diphosphate + H(+). Its pathway is cofactor biosynthesis; (R)-pantothenate biosynthesis; (R)-pantothenate from (R)-pantoate and beta-alanine: step 1/1. Catalyzes the condensation of pantoate with beta-alanine in an ATP-dependent reaction via a pantoyl-adenylate intermediate. The sequence is that of Pantothenate synthetase from Escherichia coli O17:K52:H18 (strain UMN026 / ExPEC).